A 37-amino-acid chain; its full sequence is Large ribosomal subunit protein bL36 (37 aa).

Belongs to the bacterial ribosomal protein bL36 family.

This is Large ribosomal subunit protein bL36 from Desulforamulus reducens (strain ATCC BAA-1160 / DSM 100696 / MI-1) (Desulfotomaculum reducens).